We begin with the raw amino-acid sequence, 116 residues long: Ribosome-binding factor A (116 aa).

This sequence belongs to the RbfA family. As to quaternary structure, monomer. Binds 30S ribosomal subunits, but not 50S ribosomal subunits or 70S ribosomes.

The protein localises to the cytoplasm. In terms of biological role, one of several proteins that assist in the late maturation steps of the functional core of the 30S ribosomal subunit. Associates with free 30S ribosomal subunits (but not with 30S subunits that are part of 70S ribosomes or polysomes). Required for efficient processing of 16S rRNA. May interact with the 5'-terminal helix region of 16S rRNA. This chain is Ribosome-binding factor A, found in Enterococcus faecalis (strain ATCC 700802 / V583).